Reading from the N-terminus, the 102-residue chain is Putative septation protein SpoVG 2 (102 aa).

It belongs to the SpoVG family.

Functionally, could be involved in septation. This chain is Putative septation protein SpoVG 2, found in Listeria innocua serovar 6a (strain ATCC BAA-680 / CLIP 11262).